The following is a 445-amino-acid chain: ATP synthase subunit b-delta (445 aa).

The interval M1 to A168 is ATP synthase subunit b. Residues I3 to V23 form a helical membrane-spanning segment. The tract at residues S169 to D445 is ATP synthase subunit delta.

It in the N-terminal section; belongs to the ATPase B chain family. The protein in the C-terminal section; belongs to the ATPase delta chain family. F-type ATPases have 2 components, F(1) - the catalytic core - and F(0) - the membrane proton channel. F(1) has five subunits: alpha(3), beta(3), gamma(1), delta(1), epsilon(1). F(0) has three main subunits: a(1), b(2) and c(10-14). The alpha and beta chains form an alternating ring which encloses part of the gamma chain. F(1) is attached to F(0) by a central stalk formed by the gamma and epsilon chains, while a peripheral stalk is formed by the delta and b chains.

It is found in the cell membrane. Its function is as follows. F(1)F(0) ATP synthase produces ATP from ADP in the presence of a proton or sodium gradient. F-type ATPases consist of two structural domains, F(1) containing the extramembraneous catalytic core and F(0) containing the membrane proton channel, linked together by a central stalk and a peripheral stalk. During catalysis, ATP synthesis in the catalytic domain of F(1) is coupled via a rotary mechanism of the central stalk subunits to proton translocation. Functionally, this fusion protein includes a component of the F(0) channel (subunit b) and of the F(1) subunit (subunit delta). Two copies of subunit b and one of delta together form the peripheral 'stator' stalk which links F(1) to F(0). In Mycolicibacterium vanbaalenii (strain DSM 7251 / JCM 13017 / BCRC 16820 / KCTC 9966 / NRRL B-24157 / PYR-1) (Mycobacterium vanbaalenii), this protein is ATP synthase subunit b-delta (atpFH).